A 198-amino-acid polypeptide reads, in one-letter code: MKQFIDFIPLLLFFIVYKLDPRPVEFAGHGFEFGGIYSATAMLIVSSVVVYGALFLRHGKLEKGQLLTLVACLVFGGLTLAFHSETFLKWKAPVVNWLFALAFAGSHFIGDRVLIKRIMGHALTLPETVWNRLNVAWIGFFLVCGAANLFVAFTFQDFWVDFKVFGSLGMTVIFLVAQGVYLSRHLHDADPSTSKPKD.

5 consecutive transmembrane segments (helical) span residues 36–56, 64–84, 90–110, 135–155, and 162–182; these read IYSA…ALFL, GQLL…AFHS, WKAP…HFIG, VAWI…AFTF, and FKVF…GVYL.

This sequence belongs to the YciB family.

The protein resides in the cell inner membrane. Functionally, plays a role in cell envelope biogenesis, maintenance of cell envelope integrity and membrane homeostasis. The sequence is that of Inner membrane-spanning protein YciB from Pseudomonas entomophila (strain L48).